A 163-amino-acid polypeptide reads, in one-letter code: Nucleotide-binding protein HDEF_1968 (163 aa).

It belongs to the YajQ family.

Nucleotide-binding protein. The chain is Nucleotide-binding protein HDEF_1968 from Hamiltonella defensa subsp. Acyrthosiphon pisum (strain 5AT).